Consider the following 466-residue polypeptide: Cytochrome b561 and DOMON domain-containing protein At3g59070 (466 aa).

The N-terminal stretch at 1-25 (MSLSSRATLVVLCCLFMLIPSFTTA) is a signal peptide. The region spanning 57–172 (LNSYLHFNYA…TVVNHLWQDG (116 aa)) is the DOMON domain. The region spanning 179–380 (RLGMHAMSGD…MEILQFKKRW (202 aa)) is the Cytochrome b561 domain. 3 helical membrane passes run 219 to 239 (IHAIVNALSWGILMPIGVMAA), 252 to 272 (WFYIHVVCQTTGYFSGLIGGL), and 287 to 307 (TLHTVIGLLLFALGFLQILSL). The heme b site is built by histidine 220, histidine 256, histidine 289, and histidine 325. 2 helical membrane-spanning segments follow: residues 327-347 (TMGYIVIVLSIYNIYKGLSIL) and 355-375 (IAYTTIICCIAAFAVVMEILQ).

Requires heme b as cofactor.

Its subcellular location is the membrane. Functionally, may act as a catecholamine-responsive trans-membrane electron transporter. In Arabidopsis thaliana (Mouse-ear cress), this protein is Cytochrome b561 and DOMON domain-containing protein At3g59070.